A 264-amino-acid chain; its full sequence is NAD-capped RNA hydrolase NudC (264 aa).

R70 provides a ligand contact to substrate. 2 residues coordinate Zn(2+): C99 and C102. E112 lines the substrate pocket. Zn(2+) is bound by residues C117 and C122. A substrate-binding site is contributed by Y127. The Nudix hydrolase domain maps to 128–252 (PVICPCIIVA…TIALKLIEHT (125 aa)). The a divalent metal cation site is built by A161, E177, and E181. Positions 162–183 (GFVEVGETFEQAVHREVLEETG) match the Nudix box motif. 195–202 (QPWAFPNS) lines the substrate pocket. E222 provides a ligand contact to a divalent metal cation. A245 contacts substrate.

Belongs to the Nudix hydrolase family. NudC subfamily. Homodimer. Mg(2+) is required as a cofactor. Mn(2+) serves as cofactor. The cofactor is Zn(2+).

The enzyme catalyses a 5'-end NAD(+)-phospho-ribonucleoside in mRNA + H2O = a 5'-end phospho-adenosine-phospho-ribonucleoside in mRNA + beta-nicotinamide D-ribonucleotide + 2 H(+). The catalysed reaction is NAD(+) + H2O = beta-nicotinamide D-ribonucleotide + AMP + 2 H(+). It carries out the reaction NADH + H2O = reduced beta-nicotinamide D-ribonucleotide + AMP + 2 H(+). Functionally, mRNA decapping enzyme that specifically removes the nicotinamide adenine dinucleotide (NAD) cap from a subset of mRNAs by hydrolyzing the diphosphate linkage to produce nicotinamide mononucleotide (NMN) and 5' monophosphate mRNA. The NAD-cap is present at the 5'-end of some mRNAs and stabilizes RNA against 5'-processing. Has preference for mRNAs with a 5'-end purine. Catalyzes the hydrolysis of a broad range of dinucleotide pyrophosphates. The chain is NAD-capped RNA hydrolase NudC from Pasteurella multocida (strain Pm70).